A 180-amino-acid polypeptide reads, in one-letter code: Ribosome-recycling factor (180 aa).

A disordered region spans residues 135–156 (SDLKKDNDLSEDSRHRTEDDIQ).

Belongs to the RRF family.

The protein resides in the cytoplasm. Functionally, responsible for the release of ribosomes from messenger RNA at the termination of protein biosynthesis. May increase the efficiency of translation by recycling ribosomes from one round of translation to another. The polypeptide is Ribosome-recycling factor (Oenococcus oeni (strain ATCC BAA-331 / PSU-1)).